A 443-amino-acid polypeptide reads, in one-letter code: ATP-dependent protease ATPase subunit HslU (443 aa).

Residues Ile-18, 60–65 (GVGKTE), Asp-256, Glu-321, and Arg-393 contribute to the ATP site.

This sequence belongs to the ClpX chaperone family. HslU subfamily. In terms of assembly, a double ring-shaped homohexamer of HslV is capped on each side by a ring-shaped HslU homohexamer. The assembly of the HslU/HslV complex is dependent on binding of ATP.

The protein resides in the cytoplasm. Functionally, ATPase subunit of a proteasome-like degradation complex; this subunit has chaperone activity. The binding of ATP and its subsequent hydrolysis by HslU are essential for unfolding of protein substrates subsequently hydrolyzed by HslV. HslU recognizes the N-terminal part of its protein substrates and unfolds these before they are guided to HslV for hydrolysis. This is ATP-dependent protease ATPase subunit HslU from Wigglesworthia glossinidia brevipalpis.